The following is a 380-amino-acid chain: MASLPVLQKESVFQSGAHAYRIPALLYLPGQQSLLAFAEQRASKKDEHAELIVLRRGDYDAPTHQVQWQAQEVVAQARLDGHRSMNPCPLYDAQTGTLFLFFIAIPGQVTEQQQLQTRANVTRLCQVTSTDHGRTWSSPRDLTDAAIGPAYREWSTFAVGPGHCLQLHDRARSLVVPAYAYRKLHPIQRPIPSAFCFLSHDHGRTWARGHFVAQDTLECQVAEVETGEQRVVTLNARSHLRARVQAQSTNDGLDFQESQLVKKLVEPPPQGCQGSVISFPSPRSGPGSPAQWLLYTHPTHSWQRADLGAYLNPRPPAPEAWSEPVLLAKGSCAYSDLQSMGTGPDGSPLFGCLYEANDYEEIVFLMFTLKQAFPAEYLPQ.

The short motif at tyrosine 20–proline 23 is the FRIP motif element. Substrate is bound by residues arginine 21 and arginine 41. Catalysis depends on aspartate 46, which acts as the Proton acceptor. One copy of the BNR 1 repeat lies at valine 127–serine 138. The substrate site is built by tyrosine 179 and tyrosine 181. The stretch at phenylalanine 197 to arginine 208 is one BNR 2 repeat. The substrate site is built by glutamate 218, arginine 237, and arginine 304. Tyrosine 334 functions as the Nucleophile in the catalytic mechanism. Glutamate 355 is a catalytic residue.

The protein belongs to the glycosyl hydrolase 33 family. As to expression, expressed in skeletal muscle, fetal liver and embryonic carcinoma cell line NT2-D1.

It localises to the cytoplasm. It is found in the cytosol. The catalysed reaction is Hydrolysis of alpha-(2-&gt;3)-, alpha-(2-&gt;6)-, alpha-(2-&gt;8)- glycosidic linkages of terminal sialic acid residues in oligosaccharides, glycoproteins, glycolipids, colominic acid and synthetic substrates.. It carries out the reaction a ganglioside GD1a + H2O = a ganglioside GM1 + N-acetylneuraminate. The enzyme catalyses a ganglioside GM1 + H2O = a ganglioside GA1 + N-acetylneuraminate. It catalyses the reaction a ganglioside GT1b + H2O = a ganglioside GD1b + N-acetylneuraminate. The catalysed reaction is a ganglioside GD1b + H2O = a ganglioside GM1 + N-acetylneuraminate. It carries out the reaction a ganglioside GD3 + H2O = a ganglioside GM3 + N-acetylneuraminate. The enzyme catalyses a ganglioside GM3 + H2O = a beta-D-galactosyl-(1-&gt;4)-beta-D-glucosyl-(1&lt;-&gt;1)-ceramide + N-acetylneuraminate. It catalyses the reaction a ganglioside GM2 + H2O = a ganglioside GA2 + N-acetylneuraminate. The catalysed reaction is a neolactoside IV(3)-alpha-NeuAc-nLc4Cer(d18:1(4E)) + H2O = a neolactoside nLc4Cer(d18:1(4E)) + N-acetylneuraminate. It carries out the reaction N-acetyl-alpha-neuraminosyl-(2-&gt;3)-beta-D-galactosyl-(1-&gt;4)-D-glucose + H2O = lactose + N-acetylneuraminate. In terms of biological role, exo-alpha-sialidase that catalyzes the hydrolytic cleavage of the terminal sialic acid (N-acetylneuraminic acid, Neu5Ac) of a glycan moiety in the catabolism of glycolipids, glycoproteins and oligosacharides. Recognizes sialyl linkage positions of the glycan moiety as well as the supramolecular organization of the sialoglycoconjugate. Displays preference for alpha-(2-&gt;3)-sialylated GD1a and GT1B gangliosides over alpha-(2-&gt;8)-sialylated GD1b, in both monomeric forms and micelles. Hydrolyzes monomeric GM1 ganglioside, but has no activity toward the miscellar form. Has lower sialidase activity for glycoproteins such as fetuin and TF/transferrin that carry a mixture of alpha-(2-&gt;3) and alpha-(2-&gt;6)-sialyl linkages. Cleaves milk oligosaccharide alpha-(2-&gt;3)-sialyllactose, but is inactive toward alpha-(2-&gt;6)-sialyllactose isomer. Has no activity toward colominic acid, a homomer of alpha-(2-&gt;8)-linked Neu5Ac residues. The protein is Sialidase-2 (NEU2) of Homo sapiens (Human).